The primary structure comprises 300 residues: Taste receptor type 2 member 105 (300 aa).

At 1–7 the chain is on the extracellular side; the sequence is MLSAAEG. Residues 8 to 28 traverse the membrane as a helical segment; it reads ILLSIATVEAGLGVLGNTFIA. Over 29–43 the chain is Cytoplasmic; that stretch reads LVNCMDWAKNNKLSM. A helical membrane pass occupies residues 44 to 64; sequence TGFLLIGLATSRIFIVWLLTL. Residues 65–87 are Extracellular-facing; that stretch reads DAYAKLFYPSKYFSSSLIEIISY. The chain crosses the membrane as a helical span at residues 88-108; that stretch reads IWMTVNHLTVWFATSLSIFYF. Residues 109 to 128 are Cytoplasmic-facing; sequence LKIANFSDCVFLWLKRRTDK. A helical transmembrane segment spans residues 129–149; the sequence is AFVFLLGCLLTSWVISFSFVV. Residues 150–181 are Extracellular-facing; it reads KVMKDGKVNHRNRTSEMYWEKRQFTINYVFLN. The N-linked (GlcNAc...) asparagine glycan is linked to N161. Residues 182 to 202 form a helical membrane-spanning segment; that stretch reads IGVISLFMMTLTACFLLIMSL. The Cytoplasmic portion of the chain corresponds to 203-233; the sequence is WRHSRQMQSGVSGFRDLNTEAHVKAIKFLIS. A helical transmembrane segment spans residues 234-254; the sequence is FIILFVLYFIGVSIEIICIFI. Topologically, residues 255 to 259 are extracellular; that stretch reads PENKL. A helical transmembrane segment spans residues 260-280; sequence LFIFGFTTASIYPCCHSFILI. The Cytoplasmic segment spans residues 281 to 300; the sequence is LSNSQLKQAFVKVLQGLKFF.

It belongs to the G-protein coupled receptor T2R family. Expressed in subsets of taste receptor cells of the tongue and palate epithelium and exclusively in gustducin-positive cells. Expressed in gastric and duodenal tissues.

Its subcellular location is the membrane. Gustducin-coupled cycloheximide receptor implicated in the perception of bitter compounds in the oral cavity and the gastrointestinal tract. Signals through PLCB2 and the calcium-regulated cation channel TRPM5. This Mus musculus (Mouse) protein is Taste receptor type 2 member 105 (Tas2r105).